Reading from the N-terminus, the 339-residue chain is Alpha-ketoglutarate-dependent dioxygenase btcD (339 aa).

Histidine 96 contributes to the substrate binding site. Fe cation contacts are provided by histidine 140 and aspartate 142. Residue threonine 173 participates in 2-oxoglutarate binding. The disordered stretch occupies residues 207–230 (DGSDPKFQVPRGSPANVGTNLRPT). A Fe cation-binding site is contributed by histidine 302. 2-oxoglutarate is bound by residues arginine 314 and arginine 318. Arginine 318 contributes to the substrate binding site.

It belongs to the TfdA dioxygenase family. Fe(2+) is required as a cofactor.

Its pathway is secondary metabolite biosynthesis; terpenoid biosynthesis. In terms of biological role, alpha-ketoglutarate-dependent dioxygenase; part of the gene cluster that mediates the biosynthesis of betaestacins. The bifunctional terpene synthase btcA converts isopentenyl diphosphate (IPP) and dimethylallyl diphosphate (DMAPP) into the sesterterpene betaestacin I. The C-terminal prenyltransferase (PT) domain of btcA catalyzes formation of GFPP, whereas the N-terminal terpene cyclase (TC) domain catalyzes the cyclization of GFPP into betaestacin I. The cytochrome P450 monooxygenase btcB is then responsible for the six-step oxidation of betaestacin I to yield betaestacin II. The roles of the cytochrome P450 monooxygenase btcC and the alpha-ketoglutarate-dependent dioxygenase btcD have not been identified yet. In Neocamarosporium betae (Beet black rot fungus), this protein is Alpha-ketoglutarate-dependent dioxygenase btcD.